Consider the following 207-residue polypeptide: Probable GTP-binding protein EngB (207 aa).

Residues 23-197 enclose the EngB-type G domain; that stretch reads AGIEVVFAGR…ETVIGRWLFA (175 aa). Residues 31 to 38, 58 to 62, 76 to 79, 143 to 146, and 176 to 178 each bind GTP; these read GRSNAGKS, GRTQL, DLPG, TKAD, and FSS. Residues S38 and T60 each contribute to the Mg(2+) site.

The protein belongs to the TRAFAC class TrmE-Era-EngA-EngB-Septin-like GTPase superfamily. EngB GTPase family. Mg(2+) serves as cofactor.

In terms of biological role, necessary for normal cell division and for the maintenance of normal septation. The sequence is that of Probable GTP-binding protein EngB from Methylobacillus flagellatus (strain ATCC 51484 / DSM 6875 / VKM B-1610 / KT).